Here is a 216-residue protein sequence, read N- to C-terminus: UPF0502 protein Ent638_1581 (216 aa).

Belongs to the UPF0502 family.

The polypeptide is UPF0502 protein Ent638_1581 (Enterobacter sp. (strain 638)).